The following is a 1085-amino-acid chain: DNA mismatch repair protein MutS (1085 aa).

Residues 533-564 are disordered; that stretch reads DEDLFGEEEQNAPPVGSSNHAVGTQPSADDEA. Residues 548-559 are compositionally biased toward polar residues; the sequence is GSSNHAVGTQPS. 812-819 contributes to the ATP binding site; the sequence is GPNMSGKS. The tract at residues 997–1042 is disordered; the sequence is ERRAPRSAPPTVPARGDDRRSAGRASSSGAGAARGEQGRTLPDGQL. A compositionally biased stretch (low complexity) spans 1019 to 1031; sequence GRASSSGAGAARG.

Belongs to the DNA mismatch repair MutS family.

Functionally, this protein is involved in the repair of mismatches in DNA. It is possible that it carries out the mismatch recognition step. This protein has a weak ATPase activity. The polypeptide is DNA mismatch repair protein MutS (Roseiflexus sp. (strain RS-1)).